The chain runs to 395 residues: Tyrosine--tRNA ligase (395 aa).

The 'HIGH' region motif lies at Pro-42–His-51. The short motif at Lys-226–Ser-230 is the 'KMSKS' region element. An ATP-binding site is contributed by Lys-229. Positions Ile-334–Leu-394 constitute an S4 RNA-binding domain.

This sequence belongs to the class-I aminoacyl-tRNA synthetase family. TyrS type 2 subfamily. In terms of assembly, homodimer.

It is found in the cytoplasm. The catalysed reaction is tRNA(Tyr) + L-tyrosine + ATP = L-tyrosyl-tRNA(Tyr) + AMP + diphosphate + H(+). Catalyzes the attachment of tyrosine to tRNA(Tyr) in a two-step reaction: tyrosine is first activated by ATP to form Tyr-AMP and then transferred to the acceptor end of tRNA(Tyr). The protein is Tyrosine--tRNA ligase of Photobacterium profundum (strain SS9).